Consider the following 275-residue polypeptide: Tryptophan synthase alpha chain (275 aa).

Residues Glu-51 and Glu-62 each act as proton acceptor in the active site.

The protein belongs to the TrpA family. In terms of assembly, tetramer of two alpha and two beta chains.

It catalyses the reaction (1S,2R)-1-C-(indol-3-yl)glycerol 3-phosphate + L-serine = D-glyceraldehyde 3-phosphate + L-tryptophan + H2O. It participates in amino-acid biosynthesis; L-tryptophan biosynthesis; L-tryptophan from chorismate: step 5/5. Its function is as follows. The alpha subunit is responsible for the aldol cleavage of indoleglycerol phosphate to indole and glyceraldehyde 3-phosphate. This is Tryptophan synthase alpha chain from Caulobacter sp. (strain K31).